The primary structure comprises 273 residues: Phosphate import ATP-binding protein PstB (273 aa).

Residues Leu17 to Pro259 form the ABC transporter domain. Gly49–Ser56 serves as a coordination point for ATP.

Belongs to the ABC transporter superfamily. Phosphate importer (TC 3.A.1.7) family. In terms of assembly, the complex is composed of two ATP-binding proteins (PstB), two transmembrane proteins (PstC and PstA) and a solute-binding protein (PstS).

It localises to the cell inner membrane. It carries out the reaction phosphate(out) + ATP + H2O = ADP + 2 phosphate(in) + H(+). Its function is as follows. Part of the ABC transporter complex PstSACB involved in phosphate import. Responsible for energy coupling to the transport system. The protein is Phosphate import ATP-binding protein PstB of Trichodesmium erythraeum (strain IMS101).